The following is a 152-amino-acid chain: Transcriptional regulator MraZ (152 aa).

2 SpoVT-AbrB domains span residues 5-52 and 81-124; these read ATLV…PLPE and ASEC…DETT.

Belongs to the MraZ family. In terms of assembly, forms oligomers.

It is found in the cytoplasm. The protein resides in the nucleoid. Its function is as follows. Negatively regulates its own expression and that of the subsequent genes in the proximal part of the division and cell wall (dcw) gene cluster. Acts by binding directly to DNA. May also regulate the expression of genes outside the dcw cluster. The polypeptide is Transcriptional regulator MraZ (Citrobacter koseri (strain ATCC BAA-895 / CDC 4225-83 / SGSC4696)).